The sequence spans 174 residues: Repair DNA polymerase X (174 aa).

The involved in ssDNA binding stretch occupies residues 42-51; it reads REEKMLNDVD. Residues D49 and D51 each coordinate Mg(2+). C81 and C86 are disulfide-bonded. D100 lines the Mg(2+) pocket.

The protein belongs to the DNA polymerase type-X family. Mg(2+) is required as a cofactor.

The protein localises to the virion. It carries out the reaction DNA(n) + a 2'-deoxyribonucleoside 5'-triphosphate = DNA(n+1) + diphosphate. In terms of biological role, error-prone polymerase lacking a proofreading 3'-5' exonuclease which catalyzes the gap-filling reaction during the DNA repair process. Specifically binds intermediates in the single-nucleotide base-excision repair process. Also catalyzes DNA polymerization with low nucleotide-insertion fidelity. Probably acts as a strategic DNA mutase, which gives rise to a rapid emergence of variants. Generates mismatched G-G pairs, in that case, the polymerase first binds the deoxynucleotide followed by mismatch formation. Together with the viral DNA ligase, fills the single nucleotide gaps generated by the AP endonuclease. Binds DNA with high affinity via the helix alphaE. This Ornithodoros (relapsing fever ticks) protein is Repair DNA polymerase X.